The primary structure comprises 197 residues: MIASDGLGIAGVDEVGRGCLFGPVFAAAVVLSDHAAEHLQAAGLTDSKALTPSRRAALVPLIEAHAHAWGLGQSSARAVDRDGIRSATEQAMLCALQRLPCRPQLVLVDGVLPLRLWEGSQRTIVRGDSSHAAIAAASVLAKEARDALIRRLSNRFPGYGLERHAGYGTAQHRAALLACGPTPLHRHSFLRKLFATV.

The RNase H type-2 domain maps to 7–197; that stretch reads LGIAGVDEVG…SFLRKLFATV (191 aa). Residues Asp-13, Glu-14, and Asp-109 each coordinate a divalent metal cation.

This sequence belongs to the RNase HII family. Mn(2+) serves as cofactor. The cofactor is Mg(2+).

The protein localises to the cytoplasm. The enzyme catalyses Endonucleolytic cleavage to 5'-phosphomonoester.. In terms of biological role, endonuclease that specifically degrades the RNA of RNA-DNA hybrids. The sequence is that of Ribonuclease HII from Synechococcus sp. (strain CC9311).